The primary structure comprises 379 residues: MEQLSSANSLFALELFHTLSESSPTGNIFFSPFSISSALAMVFLGTKGTTAAQLSKTFHFDSVEDVHSRFQSLNAEVSKRGASHTLKLANRLYGEKTYNFLPEFLTSTQKMYGADLAPVDFQHASEDARKEINQWVKGQTEGKIPELLAVGVVDSMTKLVLVNAIYFKGMWEEKFMKQDTTDAPFRLNKKNTKSVKMMYQKKKFFFGYISDLKCKVLEMPYQGGELSMVILLPEDIEDESTGLKKIEEQITLEKLREWTKRENLENIDVHVKLPRFKIEESYILNSNLGRLGLQDLFNSSKADLSGMSGSRDLFISKIVHKAFVEVNEEGTEAAAATAGIATFCMLLPEEEFTADHPFIFFIRHNPTANVLFLGRVCSP.

Phosphoserine is present on S300.

Belongs to the serpin family. Ov-serpin subfamily. Monomer.

It is found in the secreted. It localises to the cytoplasm. Its subcellular location is the cytolytic granule. The protein localises to the early endosome. In terms of biological role, regulates the activity of the neutrophil proteases. In Rattus norvegicus (Rat), this protein is Leukocyte elastase inhibitor A (Serpinb1a).